We begin with the raw amino-acid sequence, 370 residues long: tRNA-specific 2-thiouridylase MnmA (370 aa).

ATP-binding positions include 7–14 (GISGGVDS) and M33. The segment at 104 to 106 (NPD) is interaction with target base in tRNA. C109 (nucleophile) is an active-site residue. Residues C109 and C208 are joined by a disulfide bond. G134 serves as a coordination point for ATP. Residues 158–160 (KDQ) form an interaction with tRNA region. The Cysteine persulfide intermediate role is filled by C208.

It belongs to the MnmA/TRMU family.

The protein localises to the cytoplasm. It catalyses the reaction S-sulfanyl-L-cysteinyl-[protein] + uridine(34) in tRNA + AH2 + ATP = 2-thiouridine(34) in tRNA + L-cysteinyl-[protein] + A + AMP + diphosphate + H(+). Functionally, catalyzes the 2-thiolation of uridine at the wobble position (U34) of tRNA, leading to the formation of s(2)U34. In Malacoplasma penetrans (strain HF-2) (Mycoplasma penetrans), this protein is tRNA-specific 2-thiouridylase MnmA.